The chain runs to 472 residues: MFEVVIGLEVHTQLNTKTKIFCSCATSFGEAPNTNVCPTCLALPGALPVLNEEAVKKAIAFGKAVNAAINKKSVFNRKNYFYPDLPKAYQISQFDIPIVEKGELFINVNGENKRIGITRAHLEEDAGKNIHENNFSKVDLNRAGTPLLEIVSEPELRSSDEAVAYLKKLHSIIRFLDISDANMQEGSFRCDANVSIRPKGDTKLYTRVEIKNLNSFRFIQKAIDFEVKRQSEAWEDGTYEQEVVQETRLFDTTNLVTRSMRGKEEAAEYRYFPDPDLLPVLLKDEFLQIKIPELPDEKKMRFVSELGIKESDAEVIISSLEMSRFFESLISQNLSPKLCVNWLNTELMGFLKGELTIENSPVDAQKLGDLIKRIEDGTISAKAAKDVLAFVFENTNVEIDEAIEKLGLKQVSDDSAIEAVIEQILNANADKVAEYKSGKDKLFGFFVGQTMKEGKRAFNPAKVNEILKAKLG.

This sequence belongs to the GatB/GatE family. GatB subfamily. Heterotrimer of A, B and C subunits.

It catalyses the reaction L-glutamyl-tRNA(Gln) + L-glutamine + ATP + H2O = L-glutaminyl-tRNA(Gln) + L-glutamate + ADP + phosphate + H(+). The enzyme catalyses L-aspartyl-tRNA(Asn) + L-glutamine + ATP + H2O = L-asparaginyl-tRNA(Asn) + L-glutamate + ADP + phosphate + 2 H(+). Allows the formation of correctly charged Asn-tRNA(Asn) or Gln-tRNA(Gln) through the transamidation of misacylated Asp-tRNA(Asn) or Glu-tRNA(Gln) in organisms which lack either or both of asparaginyl-tRNA or glutaminyl-tRNA synthetases. The reaction takes place in the presence of glutamine and ATP through an activated phospho-Asp-tRNA(Asn) or phospho-Glu-tRNA(Gln). This chain is Aspartyl/glutamyl-tRNA(Asn/Gln) amidotransferase subunit B, found in Campylobacter jejuni subsp. doylei (strain ATCC BAA-1458 / RM4099 / 269.97).